The following is a 549-amino-acid chain: YTH domain-containing family protein 1 (549 aa).

5 disordered regions span residues 29 to 102 (QAPW…QPNM), 139 to 165 (GHPPHQAPVDSQSNVVRGPPRKPRQSG), 243 to 262 (GASGITAPTGPSATTPQQAV), 273 to 298 (DSTETQSDNADTDTPTAVGTPDAKGP), and 425 to 458 (REDSSEGVTQEEPAPAVAEQDDTTGGLDGNSENK). Over residues 49–61 (VVGQTQSSPQYNG) the composition is skewed to polar residues. The segment covering 71 to 102 (QGYYMPQQQQQQQQMPQYYGGPMSPSQPQPNM) has biased composition (low complexity). Composition is skewed to polar residues over residues 251–260 (TGPSATTPQQ) and 273–289 (DSTETQSDNADTDTPTA). Residues 307–513 (DRFFVLKSLT…SVGRRLIGLF (207 aa)) form the YTH domain.

The protein belongs to the YTHDF family. YTHDF1 subfamily.

In terms of biological role, specifically recognizes and binds N6-methyladenosine (m6A)-containing mRNAs, and regulates their stability. M6A is a modification present at internal sites of mRNAs and some non-coding RNAs and plays a role in mRNA stability and processing. Directly interacts with the acid phosphatase APHA mRNA to increase its stability. The polypeptide is YTH domain-containing family protein 1 (Cryphonectria parasitica (strain ATCC 38755 / EP155)).